Consider the following 140-residue polypeptide: MLLHIVARGRIGRGPEADLVDRYIKRIGWPTRITELPDSGGRLPPRDPGTVLVMLDEKGEQLGSMAFAEKLGRWRDDGRREVRFLIGAADGFDEAQRREADLLFAFGKATWPHLLARAMLAEQLWRATSILAGHPYHREG.

The S-adenosyl-L-methionine site is built by leucine 55 and glycine 87.

It belongs to the RNA methyltransferase RlmH family. In terms of assembly, homodimer.

The protein localises to the cytoplasm. It carries out the reaction pseudouridine(1915) in 23S rRNA + S-adenosyl-L-methionine = N(3)-methylpseudouridine(1915) in 23S rRNA + S-adenosyl-L-homocysteine + H(+). Functionally, specifically methylates the pseudouridine at position 1915 (m3Psi1915) in 23S rRNA. This chain is Ribosomal RNA large subunit methyltransferase H, found in Rhizorhabdus wittichii (strain DSM 6014 / CCUG 31198 / JCM 15750 / NBRC 105917 / EY 4224 / RW1) (Sphingomonas wittichii).